The primary structure comprises 229 residues: Choline-phosphate cytidylyltransferase (229 aa).

CDP-choline is bound by residues L6, A8, G9, Y80, N82, S85, and A101. Residue D102 participates in Mg(2+) binding. Y185 lines the CDP-choline pocket. The Mg(2+) site is built by E211 and D213.

It belongs to the LicC/PntC cytidylyltransferase family. In terms of assembly, monomer. Forms dimers in LicC-CDP-Cho-Mg(2+) crystals, but the monomer is probably the biologically functional unit. The cofactor is Mg(2+).

The catalysed reaction is phosphocholine + CTP + H(+) = CDP-choline + diphosphate. It functions in the pathway cell wall biogenesis; teichoic acid biosynthesis. It participates in cell wall biogenesis; lipoteichoic acid biosynthesis. Its activity is regulated as follows. Mg(2+) in slight excess of CTP gives maximal activity. Strongly inhibited by Ca(2+) and several other metal ions, such as Cd(2+), Co(2+), Cu(2+), Mn(2+), Ni(2+), Zn(2+) and Fe(2+). Also inhibited by Mg(2+) at high concentrations. CDP-Cho is a competitive inhibitor with respect to CTP, whereas diphosphate is a mixed-type inhibitor with respect to CTP. Its function is as follows. Cytidylyltransferase involved in the biosynthesis of the phosphocholine containing cell wall constituents, teichoic acid and lipoteichoic acid, which are essential for cell separation and pathogenesis. Catalyzes the activation of phosphocholine (P-Cho) to CDP-choline (CDP-Cho). Can also use phosphoethanolamine and 2-aminoethylphosphonate, with much lower efficiency. Shows lower activity with dCTP, weak activity with ATP and no activity with GTP, TTP, UTP, dATP, dGTP and dTTP. The sequence is that of Choline-phosphate cytidylyltransferase from Streptococcus pneumoniae (strain ATCC BAA-255 / R6).